The following is a 728-amino-acid chain: Rho-related BTB domain-containing protein 2 (728 aa).

The segment at 1-210 (MDSDMDYERP…DNAIRAALIS (210 aa)) is rho-like. GTP contacts are provided by residues 21 to 28 (GDNAVGKT), 84 to 88 (DTFGD), and 140 to 143 (CQLD). BTB domains follow at residues 266 to 333 (ADVI…HHHH) and 500 to 567 (SDVT…TSSP). A compositionally biased stretch (gly residues) spans 304–313 (ELGGPSGSGG). Positions 304–333 (ELGGPSGSGGPRPEDHRSHPEQHHHHHHHH) are disordered. Basic and acidic residues predominate over residues 315–324 (RPEDHRSHPE). The segment at 703–728 (FWNSPSSPSSSAAGSASPSSSSSAVV) is disordered. Residues 706 to 728 (SPSSPSSSAAGSASPSSSSSAVV) are compositionally biased toward low complexity.

Belongs to the small GTPase superfamily. Rho family. Interacts with HSP90AA1 and HSP90AB1. Forms a complex with CUL3 and RBX1. Interacts (via BTB 1 domain) with CUL3. Interacts with MSI2. Post-translationally, autoubiquitinated by RHOBTB2-CUL3-RBX1 ubiquitin ligase complex. Expressed in most tissues, with highest expression in brain.

Its function is as follows. Regulator of cell proliferation and apoptosis. It likely functions as a substrate-adapter that recruits key substrates, e.g. MSI2, to CUL3-based ubiquitin ligase complexes for degradation. Required for MSI2 ubiquitination and degradation. This Mus musculus (Mouse) protein is Rho-related BTB domain-containing protein 2 (Rhobtb2).